The following is a 432-amino-acid chain: Asparagine--tRNA ligase (432 aa).

The protein belongs to the class-II aminoacyl-tRNA synthetase family. Homodimer.

The protein localises to the cytoplasm. It catalyses the reaction tRNA(Asn) + L-asparagine + ATP = L-asparaginyl-tRNA(Asn) + AMP + diphosphate + H(+). In Limosilactobacillus reuteri (strain DSM 20016) (Lactobacillus reuteri), this protein is Asparagine--tRNA ligase.